The sequence spans 1261 residues: Pentatricopeptide repeat-containing protein 5, mitochondrial (1261 aa).

PPR repeat units lie at residues 365–404 (HPDL…TSMT), 405–442 (NVRS…NQVI), 443–479 (PSSI…TYKA), 480–514 (SPST…RFSD), 550–584 (TNFT…KVSL), 806–849 (HPEV…EKAN), 852–886 (MALI…GYIP), 887–924 (RAST…NVKP), 925–959 (SVFL…GLLP), 960–995 (TSVT…NYQP), 996–1031 (RVAP…DIEP), 1032–1068 (SSHT…DVPI), 1109–1143 (DANL…NVSL), 1144–1179 (NAYI…MSGK), and 1180–1214 (EPST…RYPL). The disordered stretch occupies residues 1225–1261 (NSHMGQKPKRRSLNTSHSSLASLGNASTQHSINSSIN). A compositionally biased stretch (polar residues) spans 1237–1261 (LNTSHSSLASLGNASTQHSINSSIN).

The protein localises to the mitochondrion. Mitochondrial RNA-binding protein that acts as a general negative regulator of mitochondrial translation. The sequence is that of Pentatricopeptide repeat-containing protein 5, mitochondrial (ppr5) from Schizosaccharomyces pombe (strain 972 / ATCC 24843) (Fission yeast).